We begin with the raw amino-acid sequence, 363 residues long: UDP-3-O-acylglucosamine N-acyltransferase (363 aa).

The active-site Proton acceptor is the His239. A disordered region spans residues 342-363 (LSEMKKEVEKEKESSREKEETK).

The protein belongs to the transferase hexapeptide repeat family. LpxD subfamily. As to quaternary structure, homotrimer.

The catalysed reaction is a UDP-3-O-[(3R)-3-hydroxyacyl]-alpha-D-glucosamine + a (3R)-hydroxyacyl-[ACP] = a UDP-2-N,3-O-bis[(3R)-3-hydroxyacyl]-alpha-D-glucosamine + holo-[ACP] + H(+). It functions in the pathway bacterial outer membrane biogenesis; LPS lipid A biosynthesis. Its function is as follows. Catalyzes the N-acylation of UDP-3-O-acylglucosamine using 3-hydroxyacyl-ACP as the acyl donor. Is involved in the biosynthesis of lipid A, a phosphorylated glycolipid that anchors the lipopolysaccharide to the outer membrane of the cell. This chain is UDP-3-O-acylglucosamine N-acyltransferase, found in Syntrophus aciditrophicus (strain SB).